The sequence spans 457 residues: Ribosomal RNA-processing protein 8 (457 aa).

Disordered stretches follow at residues 52–114 (LSQQ…EVER) and 148–235 (SLNS…QETR). Phosphoserine is present on residues Ser62, Ser64, and Ser105. Polar residues predominate over residues 148–165 (SLNSVDQTVHNSRTSTAT). A phosphoserine mark is found at Ser172 and Ser177. Residues 174–183 (ESASPNSSHT) are compositionally biased toward polar residues. Over residues 184-203 (LSRKQWRNRQKNKRRHKNKF) the composition is skewed to basic residues. His282, Gly317, Asp335, Asp347, Met348, and Cys364 together coordinate S-adenosyl-L-methionine.

Belongs to the methyltransferase superfamily. RRP8 family. Component of the eNoSC complex, composed of SIRT1, SUV39H1 and RRP8.

The protein resides in the nucleus. Its subcellular location is the nucleolus. In terms of biological role, essential component of the eNoSC (energy-dependent nucleolar silencing) complex, a complex that mediates silencing of rDNA in response to intracellular energy status and acts by recruiting histone-modifying enzymes. The eNoSC complex is able to sense the energy status of cell: upon glucose starvation, elevation of NAD(+)/NADP(+) ratio activates SIRT1, leading to histone H3 deacetylation followed by dimethylation of H3 at 'Lys-9' (H3K9me2) by SUV39H1 and the formation of silent chromatin in the rDNA locus. In the complex, RRP8 binds to H3K9me2 and probably acts as a methyltransferase. Its substrates are however unknown. The polypeptide is Ribosomal RNA-processing protein 8 (Rrp8) (Rattus norvegicus (Rat)).